Consider the following 799-residue polypeptide: MRCPSLARLPHRAVSGLTRTPVRFQSQAFLTARCASTAALRSATPVHQSVLNRRYQQTRNASGTAAAVLEAAAQTPDSLSQEAIIENLDPVEAERLSRVRNIGIAAHIDSGKTTCTERVLFYTGRIKAIHEVRGRDSVGAKMDSMDLEREKGITIQSAATFCDWVKKDEDGKEQKYHMNLIDTPGHIDFTIEVERALRVLDGAVMILCAVSGVQSQTITVDRQMRRYNVPRISFVNKMDRMGANPFKSVDQINTKLKLPAAAVQVPIGAEDEFEGVVDLVRMKAIYNQGSNGENIVVKDEIPEKVRELAEERRRMLIETLADVDDDMAEIFLNEEEPTEKQIKDAIRRATIGLKFTPVFMGSALANKSVQPMLDGVIDYLPNPSEVQNTALDKKRNEAQVKLVPYNALPLVCLAFKLEESSFGQLTYIRVYQGTLRKGSYVFNARTDKKVRIPRIVRMHSNEMEDVSEIGAGEICAVFGVECASGDSFTDGQLGYTMSSMFVPEPVISLSIKPKHSKDYANFSKAMARFQREDPTFRVSFDPESEQTLISGMGELHLDIYVERMRREYRVDCETGPPQVAYRETISQRVEFDHLLKKQSGGPGDYARVVGWLEPTGKLEENQFEEQIVGGSISEKFIFACEKGFHLSCEKGPLIGHKVLGTKMVINDGATHMTDSSEMAFKNATQQAFRKAFQEGNPAVLEPMMKTVVTAPAEFQGDVIGLLNKRGATINDSEVGVDEFTVYADCSLNGMFGFSSHLRAATQGKGEYTMEFSHYEKAPPQEQRELVKKYLQAQADRHKK.

The N-terminal 24 residues, M1–F24, are a transit peptide targeting the mitochondrion. A tr-type G domain is found at S97–S384. Residues A106–T113, D182–H186, and N236–D239 each bind GTP.

This sequence belongs to the TRAFAC class translation factor GTPase superfamily. Classic translation factor GTPase family. EF-G/EF-2 subfamily.

It is found in the mitochondrion. It functions in the pathway protein biosynthesis; polypeptide chain elongation. Its function is as follows. Mitochondrial GTPase that catalyzes the GTP-dependent ribosomal translocation step during translation elongation. During this step, the ribosome changes from the pre-translocational (PRE) to the post-translocational (POST) state as the newly formed A-site-bound peptidyl-tRNA and P-site-bound deacylated tRNA move to the P and E sites, respectively. Catalyzes the coordinated movement of the two tRNA molecules, the mRNA and conformational changes in the ribosome. The protein is Elongation factor G, mitochondrial (mef1) of Emericella nidulans (strain FGSC A4 / ATCC 38163 / CBS 112.46 / NRRL 194 / M139) (Aspergillus nidulans).